The sequence spans 888 residues: Alanine--tRNA ligase (888 aa).

The Zn(2+) site is built by H570, H574, C673, and H677.

The protein belongs to the class-II aminoacyl-tRNA synthetase family. The cofactor is Zn(2+).

It localises to the cytoplasm. It carries out the reaction tRNA(Ala) + L-alanine + ATP = L-alanyl-tRNA(Ala) + AMP + diphosphate. Its function is as follows. Catalyzes the attachment of alanine to tRNA(Ala) in a two-step reaction: alanine is first activated by ATP to form Ala-AMP and then transferred to the acceptor end of tRNA(Ala). Also edits incorrectly charged Ser-tRNA(Ala) and Gly-tRNA(Ala) via its editing domain. The protein is Alanine--tRNA ligase of Chlorobium phaeobacteroides (strain DSM 266 / SMG 266 / 2430).